The chain runs to 327 residues: MQHLDEIIANATAEIEQAGSLVALDEVRVQYLGKKGHLTLQLQGLGKLDPSERREAGQLINKGKQAVQAMLTERKDALQTAELEAKLAAETIDVSLPGRRIENGGLHPVTRTVERIEQFFGELGFSTESGPEIEDAFHNFDALNIAEDHPARTDHDTFFFNPDLMLRTHTSGVQIRTMENGKPPFRFIAPGRVYRNDYDQTHTPMFHQVEGMLVDENVNFAQLKGILHDFLCNFFEEEVEVRFRPSFFPFTEPSAEVDVKRKDGKWLEVLGCGMVHPNVLRSVGIDPEKYSGFAFGMGVERLTMLRYGVNDLRAFFENDLRFLKQFK.

A Mg(2+)-binding site is contributed by glutamate 252.

This sequence belongs to the class-II aminoacyl-tRNA synthetase family. Phe-tRNA synthetase alpha subunit type 1 subfamily. Tetramer of two alpha and two beta subunits. It depends on Mg(2+) as a cofactor.

The protein localises to the cytoplasm. It carries out the reaction tRNA(Phe) + L-phenylalanine + ATP = L-phenylalanyl-tRNA(Phe) + AMP + diphosphate + H(+). The polypeptide is Phenylalanine--tRNA ligase alpha subunit (Aliivibrio fischeri (strain ATCC 700601 / ES114) (Vibrio fischeri)).